Here is a 246-residue protein sequence, read N- to C-terminus: Ribosomal RNA large subunit methyltransferase E (246 aa).

S-adenosyl-L-methionine-binding residues include Gly81, Trp83, Asp104, Asp120, and Asp144. Lys184 acts as the Proton acceptor in catalysis.

It belongs to the class I-like SAM-binding methyltransferase superfamily. RNA methyltransferase RlmE family.

It localises to the cytoplasm. It carries out the reaction uridine(2552) in 23S rRNA + S-adenosyl-L-methionine = 2'-O-methyluridine(2552) in 23S rRNA + S-adenosyl-L-homocysteine + H(+). In terms of biological role, specifically methylates the uridine in position 2552 of 23S rRNA at the 2'-O position of the ribose in the fully assembled 50S ribosomal subunit. This Agrobacterium fabrum (strain C58 / ATCC 33970) (Agrobacterium tumefaciens (strain C58)) protein is Ribosomal RNA large subunit methyltransferase E.